Here is a 447-residue protein sequence, read N- to C-terminus: Argininosuccinate synthase (447 aa).

ATP-binding positions include 20 to 28 and Ala46; that span reads AFSGGLDTS. An L-citrulline-binding site is contributed by Tyr102. 2 residues coordinate ATP: Gly132 and Thr134. L-aspartate is bound by residues Thr134, Asn138, and Asp139. L-citrulline is bound at residue Asn138. Asp139 contacts ATP. Residues Arg142 and Ser195 each coordinate L-citrulline. Residue Asp197 participates in ATP binding. Positions 204, 206, and 283 each coordinate L-citrulline.

The protein belongs to the argininosuccinate synthase family. Type 2 subfamily. As to quaternary structure, homotetramer.

It is found in the cytoplasm. It carries out the reaction L-citrulline + L-aspartate + ATP = 2-(N(omega)-L-arginino)succinate + AMP + diphosphate + H(+). Its pathway is amino-acid biosynthesis; L-arginine biosynthesis; L-arginine from L-ornithine and carbamoyl phosphate: step 2/3. This chain is Argininosuccinate synthase, found in Neisseria gonorrhoeae (strain ATCC 700825 / FA 1090).